Here is a 396-residue protein sequence, read N- to C-terminus: MSQLKLNPYFGEYGGMYVPQILVPALKQLENAFVEAQADESFQAEFTDLLKNYAGRPTALTLTRNLSPNPMVKIYLKREDLLHGGAHKTNQVLGQALLAKRMGKKEIIAETGAGQHGVATALACALLGLKCKVYMGAKDVARQSPNVFRMRLMGAEVIPVTSGSATLKDACNEAMRDWSGSYEKAHYLLGTAAGPHPFPTIVREFQRMIGEETKKQMLEREGRLPDAVIACVGGGSNAIGMFADFIDETSVELIGVEPAGKGIDTHMHGAPLKHGKTGIFFGMKAPLMQDSEGQIEESYSISAGLDFPSVGPQHAHLNAIGRARYESATDDEALEAFQLLARSEGIIPALESAHALAYALRLAKECTKETILVVNLSGRGDKDIFTVSDILNGKEE.

Lys-88 is modified (N6-(pyridoxal phosphate)lysine).

The protein belongs to the TrpB family. In terms of assembly, tetramer of two alpha and two beta chains. Pyridoxal 5'-phosphate is required as a cofactor.

It catalyses the reaction (1S,2R)-1-C-(indol-3-yl)glycerol 3-phosphate + L-serine = D-glyceraldehyde 3-phosphate + L-tryptophan + H2O. It functions in the pathway amino-acid biosynthesis; L-tryptophan biosynthesis; L-tryptophan from chorismate: step 5/5. In terms of biological role, the beta subunit is responsible for the synthesis of L-tryptophan from indole and L-serine. This is Tryptophan synthase beta chain from Shewanella sp. (strain ANA-3).